The following is a 152-amino-acid chain: SMN complex subunit smn1 (152 aa).

The interval 26–51 is interacts with yip11/gem2; the sequence is KKYHSIEAKGGVSDPDSRLDGEKLIS. Residues 88 to 110 form a disordered region; the sequence is DNKGLSDEKPETRAAETHQEFME. Positions 91–108 are enriched in basic and acidic residues; sequence GLSDEKPETRAAETHQEF. The may interact with gem8 stretch occupies residues 130–152; the sequence is SWYYAGYYTGLAEGLAKSEQRKD.

It belongs to the SMN family. Homooligomer; may form homodimers and homotetramers. Part of the core SMN complex at least composed of smn1, yip11/gem2, gem6, gem7 and gem8. Part of the SMN-Sm complex. Interacts with yip11/gem2; the interaction is direct. Interacts with gem8; the interaction is direct. Interacts with proteins of the Sm complex, including smn1, smb1, smd1, smd2 and smd3.

It is found in the nucleus. Its function is as follows. The SMN complex catalyzes the assembly of small nuclear ribonucleoproteins (snRNPs), the building blocks of the spliceosome, and thereby plays an important role in the splicing of cellular pre-mRNAs. Most spliceosomal snRNPs contain a common set of Sm proteins smb1, smd1, smd2, smd3, sme1, smf1 and smg1 that assemble in a heptameric protein ring on the Sm site of the small nuclear RNA to form the core snRNP (Sm core). In the cytosol, the Sm proteins smd1, smd2, sme1, smf1 and smg1 (5Sm) are trapped in an inactive 6S pICln-Sm complex by the chaperone saf5 that controls the assembly of the core snRNP. To assemble core snRNPs, the SMN complex accepts the trapped 5Sm proteins from saf5 forming an intermediate. Binding of snRNA inside 5Sm triggers eviction of the SMN complex, thereby allowing binding of smd3 and smb1 to complete assembly of the core snRNP. Within the SMN complex, smn1 acts as a structural backbone and together with yip11/gem2 it gathers the Sm complex subunits. The sequence is that of SMN complex subunit smn1 from Schizosaccharomyces pombe (strain 972 / ATCC 24843) (Fission yeast).